The primary structure comprises 1270 residues: DNA-directed RNA polymerase subunit beta (1270 aa).

It belongs to the RNA polymerase beta chain family. As to quaternary structure, the RNAP catalytic core consists of 2 alpha, 1 beta, 1 beta' and 1 omega subunit. When a sigma factor is associated with the core the holoenzyme is formed, which can initiate transcription.

The enzyme catalyses RNA(n) + a ribonucleoside 5'-triphosphate = RNA(n+1) + diphosphate. Its function is as follows. DNA-dependent RNA polymerase catalyzes the transcription of DNA into RNA using the four ribonucleoside triphosphates as substrates. The protein is DNA-directed RNA polymerase subunit beta of Christiangramia forsetii (strain DSM 17595 / CGMCC 1.15422 / KT0803) (Gramella forsetii).